The chain runs to 229 residues: Large ribosomal subunit protein uL1 (229 aa).

This sequence belongs to the universal ribosomal protein uL1 family. As to quaternary structure, part of the 50S ribosomal subunit.

Its function is as follows. Binds directly to 23S rRNA. The L1 stalk is quite mobile in the ribosome, and is involved in E site tRNA release. Functionally, protein L1 is also a translational repressor protein, it controls the translation of the L11 operon by binding to its mRNA. The sequence is that of Large ribosomal subunit protein uL1 from Leifsonia xyli subsp. xyli (strain CTCB07).